We begin with the raw amino-acid sequence, 927 residues long: Isoleucine--tRNA ligase (927 aa).

A 'HIGH' region motif is present at residues 57-67 (PYANGHIHIGH). L-isoleucyl-5'-AMP is bound at residue Glu-561. A 'KMSKS' region motif is present at residues 602–606 (KMSKS). Residue Lys-605 coordinates ATP. Zn(2+) is bound by residues Cys-897, Cys-900, Cys-917, and Cys-920.

This sequence belongs to the class-I aminoacyl-tRNA synthetase family. IleS type 1 subfamily. Monomer. It depends on Zn(2+) as a cofactor.

It localises to the cytoplasm. The enzyme catalyses tRNA(Ile) + L-isoleucine + ATP = L-isoleucyl-tRNA(Ile) + AMP + diphosphate. Catalyzes the attachment of isoleucine to tRNA(Ile). As IleRS can inadvertently accommodate and process structurally similar amino acids such as valine, to avoid such errors it has two additional distinct tRNA(Ile)-dependent editing activities. One activity is designated as 'pretransfer' editing and involves the hydrolysis of activated Val-AMP. The other activity is designated 'posttransfer' editing and involves deacylation of mischarged Val-tRNA(Ile). The chain is Isoleucine--tRNA ligase from Syntrophotalea carbinolica (strain DSM 2380 / NBRC 103641 / GraBd1) (Pelobacter carbinolicus).